Here is a 944-residue protein sequence, read N- to C-terminus: Probable tape measure protein (944 aa).

Residues 13–52 (RMRDEASRTLRQVRDATRALQNQTNSTSQAQERLQEQFRK) are a coiled coil.

It belongs to the P2likevirus tape measure protein family.

Serves as a base for tail tube protein polymerization and acts as a template for tail length determination. This is Probable tape measure protein from Clostridioides difficile (Peptoclostridium difficile).